A 382-amino-acid polypeptide reads, in one-letter code: Mannitol-1-phosphate 5-dehydrogenase (382 aa).

3 to 14 is a binding site for NAD(+); sequence ALHFGAGNIGRG. Lysine 269 bears the N6-acetyllysine mark.

This sequence belongs to the mannitol dehydrogenase family.

It catalyses the reaction D-mannitol 1-phosphate + NAD(+) = beta-D-fructose 6-phosphate + NADH + H(+). In Shigella boydii serotype 18 (strain CDC 3083-94 / BS512), this protein is Mannitol-1-phosphate 5-dehydrogenase.